Here is a 186-residue protein sequence, read N- to C-terminus: MDVGQAVIFLGPPGAGKGTQASRLAQELGFKKLSTGDILRDHVARGTPLGERVRPIMERGDLVPDDLILELIREELAERVIFDGFPRTLAQAEALDRLLSETGTRLLGVVLVEVPEEELVRRILRRAELEGRSDDNEETVRRRLEVYREKTEPLVGYYEARGVLKRVDGLGTPDEVYARIRAALGI.

An ATP-binding site is contributed by 14 to 19 (GAGKGT). An NMP region spans residues 34-63 (STGDILRDHVARGTPLGERVRPIMERGDLV). Residues Thr35, Arg40, 61–63 (DLV), 84–87 (GFPR), and Gln91 each bind AMP. The segment at 125 to 135 (RRAELEGRSDD) is LID. Arg126 lines the ATP pocket. Arg132 and Arg143 together coordinate AMP. Gly171 lines the ATP pocket.

It belongs to the adenylate kinase family. Monomer.

It is found in the cytoplasm. The catalysed reaction is AMP + ATP = 2 ADP. It functions in the pathway purine metabolism; AMP biosynthesis via salvage pathway; AMP from ADP: step 1/1. Functionally, catalyzes the reversible transfer of the terminal phosphate group between ATP and AMP. Plays an important role in cellular energy homeostasis and in adenine nucleotide metabolism. This chain is Adenylate kinase, found in Thermus thermophilus (strain ATCC BAA-163 / DSM 7039 / HB27).